Consider the following 279-residue polypeptide: 4-hydroxy-3-methylbut-2-enyl diphosphate reductase (279 aa).

Cys-12 contributes to the [4Fe-4S] cluster binding site. The (2E)-4-hydroxy-3-methylbut-2-enyl diphosphate site is built by His-40 and His-72. Residues His-40 and His-72 each contribute to the dimethylallyl diphosphate site. 2 residues coordinate isopentenyl diphosphate: His-40 and His-72. Cys-94 contacts [4Fe-4S] cluster. His-122 contacts (2E)-4-hydroxy-3-methylbut-2-enyl diphosphate. Dimethylallyl diphosphate is bound at residue His-122. Isopentenyl diphosphate is bound at residue His-122. Glu-124 serves as the catalytic Proton donor. A (2E)-4-hydroxy-3-methylbut-2-enyl diphosphate-binding site is contributed by Thr-161. Cys-189 serves as a coordination point for [4Fe-4S] cluster. Residues Ser-217, Asn-219, and Ser-261 each coordinate (2E)-4-hydroxy-3-methylbut-2-enyl diphosphate. 3 residues coordinate dimethylallyl diphosphate: Ser-217, Asn-219, and Ser-261. Isopentenyl diphosphate-binding residues include Ser-217, Asn-219, and Ser-261.

Belongs to the IspH family. It depends on [4Fe-4S] cluster as a cofactor.

The catalysed reaction is isopentenyl diphosphate + 2 oxidized [2Fe-2S]-[ferredoxin] + H2O = (2E)-4-hydroxy-3-methylbut-2-enyl diphosphate + 2 reduced [2Fe-2S]-[ferredoxin] + 2 H(+). The enzyme catalyses dimethylallyl diphosphate + 2 oxidized [2Fe-2S]-[ferredoxin] + H2O = (2E)-4-hydroxy-3-methylbut-2-enyl diphosphate + 2 reduced [2Fe-2S]-[ferredoxin] + 2 H(+). The protein operates within isoprenoid biosynthesis; dimethylallyl diphosphate biosynthesis; dimethylallyl diphosphate from (2E)-4-hydroxy-3-methylbutenyl diphosphate: step 1/1. It participates in isoprenoid biosynthesis; isopentenyl diphosphate biosynthesis via DXP pathway; isopentenyl diphosphate from 1-deoxy-D-xylulose 5-phosphate: step 6/6. Its function is as follows. Catalyzes the conversion of 1-hydroxy-2-methyl-2-(E)-butenyl 4-diphosphate (HMBPP) into a mixture of isopentenyl diphosphate (IPP) and dimethylallyl diphosphate (DMAPP). Acts in the terminal step of the DOXP/MEP pathway for isoprenoid precursor biosynthesis. The polypeptide is 4-hydroxy-3-methylbut-2-enyl diphosphate reductase (Syntrophotalea carbinolica (strain DSM 2380 / NBRC 103641 / GraBd1) (Pelobacter carbinolicus)).